The chain runs to 460 residues: Cysteine--tRNA ligase (460 aa).

Cys28 is a Zn(2+) binding site. The 'HIGH' region signature appears at 30–40; that stretch reads VTIYDLCHIGH. Zn(2+) is bound by residues Cys209, His234, and Glu238. Residues 266–270 carry the 'KMSKS' region motif; the sequence is KMSKS. Lys269 contributes to the ATP binding site.

The protein belongs to the class-I aminoacyl-tRNA synthetase family. In terms of assembly, monomer. Zn(2+) is required as a cofactor.

Its subcellular location is the cytoplasm. The catalysed reaction is tRNA(Cys) + L-cysteine + ATP = L-cysteinyl-tRNA(Cys) + AMP + diphosphate. The sequence is that of Cysteine--tRNA ligase from Shewanella frigidimarina (strain NCIMB 400).